Here is a 355-residue protein sequence, read N- to C-terminus: Alanine racemase (355 aa).

K34 (proton acceptor; specific for D-alanine) is an active-site residue. K34 bears the N6-(pyridoxal phosphate)lysine mark. R133 lines the substrate pocket. The active-site Proton acceptor; specific for L-alanine is the Y249. M297 provides a ligand contact to substrate.

Belongs to the alanine racemase family. Requires pyridoxal 5'-phosphate as cofactor.

It carries out the reaction L-alanine = D-alanine. The protein operates within amino-acid biosynthesis; D-alanine biosynthesis; D-alanine from L-alanine: step 1/1. Functionally, catalyzes the interconversion of L-alanine and D-alanine. May also act on other amino acids. This chain is Alanine racemase (alr), found in Rickettsia peacockii (strain Rustic).